The chain runs to 84 residues: Putative protein BCE-1 (84 aa).

The polypeptide is Putative protein BCE-1 (BCE1) (Homo sapiens (Human)).